A 130-amino-acid polypeptide reads, in one-letter code: Histone H2A type 1-F (130 aa).

A disordered region spans residues 1–22; sequence MSGRGKQGGKARAKAKTRSSRA. Position 2 is a phosphoserine; by RPS6KA5 (serine 2). At arginine 4 the chain carries Citrulline; alternate. Arginine 4 is modified (symmetric dimethylarginine; by PRMT5; alternate). N6-(2-hydroxyisobutyryl)lysine; alternate is present on lysine 6. At lysine 6 the chain carries N6-(beta-hydroxybutyryl)lysine; alternate. Positions 7–19 are enriched in basic residues; that stretch reads QGGKARAKAKTRS. Lysine 10 is subject to N6-(2-hydroxyisobutyryl)lysine. Lysine 10 bears the N6-lactoyllysine; alternate mark. Lysine 37 bears the N6-(2-hydroxyisobutyryl)lysine; alternate mark. Lysine 37 is modified (N6-(beta-hydroxybutyryl)lysine; alternate). Position 37 is an N6-crotonyllysine; alternate (lysine 37). An N6-(2-hydroxyisobutyryl)lysine mark is found at lysine 75, lysine 76, and lysine 96. Lysine 96 carries the post-translational modification N6-glutaryllysine; alternate. The residue at position 105 (glutamine 105) is an N5-methylglutamine. Lysine 119 is modified (N6-(2-hydroxyisobutyryl)lysine; alternate). Lysine 119 and lysine 120 each carry N6-crotonyllysine; alternate. An N6-glutaryllysine; alternate mark is found at lysine 119 and lysine 120. Lysine 120 carries the N6-(beta-hydroxybutyryl)lysine; alternate modification. Residue lysine 120 forms a Glycyl lysine isopeptide (Lys-Gly) (interchain with G-Cter in ubiquitin); alternate linkage. Threonine 121 is modified (phosphothreonine; by DCAF1). Lysine 126 bears the N6-(beta-hydroxybutyryl)lysine; alternate mark. Lysine 126 is subject to N6-crotonyllysine; alternate. At lysine 126 the chain carries N6-glutaryllysine; alternate.

It belongs to the histone H2A family. The nucleosome is a histone octamer containing two molecules each of H2A, H2B, H3 and H4 assembled in one H3-H4 heterotetramer and two H2A-H2B heterodimers. The octamer wraps approximately 147 bp of DNA. In terms of processing, deiminated on Arg-4 in granulocytes upon calcium entry. Monoubiquitination of Lys-120 (H2AK119Ub) by RING1, TRIM37 and RNF2/RING2 complex gives a specific tag for epigenetic transcriptional repression and participates in X chromosome inactivation of female mammals. It is involved in the initiation of both imprinted and random X inactivation. Ubiquitinated H2A is enriched in inactive X chromosome chromatin. Ubiquitination of H2A functions downstream of methylation of 'Lys-27' of histone H3 (H3K27me). H2AK119Ub by RNF2/RING2 can also be induced by ultraviolet and may be involved in DNA repair. Following DNA double-strand breaks (DSBs), it is ubiquitinated through 'Lys-63' linkage of ubiquitin moieties by the E2 ligase UBE2N and the E3 ligases RNF8 and RNF168, leading to the recruitment of repair proteins to sites of DNA damage. Ubiquitination at Lys-14 and Lys-16 (H2AK13Ub and H2AK15Ub, respectively) in response to DNA damage is initiated by RNF168 that mediates monoubiquitination at these 2 sites, and 'Lys-63'-linked ubiquitin are then conjugated to monoubiquitin; RNF8 is able to extend 'Lys-63'-linked ubiquitin chains in vitro. H2AK119Ub and ionizing radiation-induced 'Lys-63'-linked ubiquitination (H2AK13Ub and H2AK15Ub) are distinct events. Post-translationally, phosphorylation on Ser-2 (H2AS1ph) is enhanced during mitosis. Phosphorylation on Ser-2 by RPS6KA5/MSK1 directly represses transcription. Acetylation of H3 inhibits Ser-2 phosphorylation by RPS6KA5/MSK1. Phosphorylation at Thr-121 (H2AT120ph) by DCAF1 is present in the regulatory region of many tumor suppresor genes and down-regulates their transcription. In terms of processing, symmetric dimethylation on Arg-4 by the PRDM1/PRMT5 complex may play a crucial role in the germ-cell lineage. Glutamine methylation at Gln-105 (H2AQ104me) by FBL is specifically dedicated to polymerase I. It is present at 35S ribosomal DNA locus and impairs binding of the FACT complex. Post-translationally, crotonylation (Kcr) is specifically present in male germ cells and marks testis-specific genes in post-meiotic cells, including X-linked genes that escape sex chromosome inactivation in haploid cells. Crotonylation marks active promoters and enhancers and confers resistance to transcriptional repressors. It is also associated with post-meiotically activated genes on autosomes. In terms of processing, hydroxybutyrylation of histones is induced by starvation. Lactylated in macrophages by EP300/P300 by using lactoyl-CoA directly derived from endogenous or exogenous lactate, leading to stimulates gene transcription.

The protein resides in the nucleus. Its subcellular location is the chromosome. Functionally, core component of nucleosome. Nucleosomes wrap and compact DNA into chromatin, limiting DNA accessibility to the cellular machineries which require DNA as a template. Histones thereby play a central role in transcription regulation, DNA repair, DNA replication and chromosomal stability. DNA accessibility is regulated via a complex set of post-translational modifications of histones, also called histone code, and nucleosome remodeling. In Mus musculus (Mouse), this protein is Histone H2A type 1-F (Hist1h2af).